Reading from the N-terminus, the 401-residue chain is Argininosuccinate synthase (401 aa).

Residue 8 to 16 (AYSGGLDTS) coordinates ATP. Tyr87 contacts L-citrulline. Position 117 (Gly117) interacts with ATP. Thr119, Asn123, and Asp124 together coordinate L-aspartate. Asn123 is an L-citrulline binding site. L-citrulline-binding residues include Arg127, Ser175, Glu259, and Tyr271.

It belongs to the argininosuccinate synthase family. Type 1 subfamily. As to quaternary structure, homotetramer.

The protein resides in the cytoplasm. It carries out the reaction L-citrulline + L-aspartate + ATP = 2-(N(omega)-L-arginino)succinate + AMP + diphosphate + H(+). The protein operates within amino-acid biosynthesis; L-arginine biosynthesis; L-arginine from L-ornithine and carbamoyl phosphate: step 2/3. The protein is Argininosuccinate synthase of Pseudarthrobacter chlorophenolicus (strain ATCC 700700 / DSM 12829 / CIP 107037 / JCM 12360 / KCTC 9906 / NCIMB 13794 / A6) (Arthrobacter chlorophenolicus).